A 408-amino-acid polypeptide reads, in one-letter code: tRNA wybutosine-synthesizing protein 2 homolog (408 aa).

S-adenosyl-L-methionine-binding positions include Ser201, Lys208, Glu248, and 276 to 277 (DN).

This sequence belongs to the class I-like SAM-binding methyltransferase superfamily. TRM5/TYW2 family.

The catalysed reaction is 4-demethylwyosine(37) in tRNA(Phe) + S-adenosyl-L-methionine = 4-demethyl-7-[(3S)-3-amino-3-carboxypropyl]wyosine(37) in tRNA(Phe) + S-methyl-5'-thioadenosine + H(+). It functions in the pathway tRNA modification; wybutosine-tRNA(Phe) biosynthesis. In terms of biological role, S-adenosyl-L-methionine-dependent transferase that acts as a component of the wybutosine biosynthesis pathway. Wybutosine is a hyper modified guanosine with a tricyclic base found at the 3'-position adjacent to the anticodon of eukaryotic phenylalanine tRNA. Catalyzes the transfer of the alpha-amino-alpha-carboxypropyl (acp) group from S-adenosyl-L-methionine to the C-7 position of 4-demethylwyosine (imG-14) to produce wybutosine-86. This chain is tRNA wybutosine-synthesizing protein 2 homolog (trmt12), found in Danio rerio (Zebrafish).